A 316-amino-acid chain; its full sequence is Ribosomal RNA small subunit methyltransferase H (316 aa).

S-adenosyl-L-methionine contacts are provided by residues 35–37 (GGH), D55, F79, D101, and Q108. The interval 291 to 316 (AIKPSKDEVDENTRSRSSVLRIAEKL) is disordered. The segment covering 294–304 (PSKDEVDENTR) has biased composition (basic and acidic residues).

It belongs to the methyltransferase superfamily. RsmH family.

The protein localises to the cytoplasm. The enzyme catalyses cytidine(1402) in 16S rRNA + S-adenosyl-L-methionine = N(4)-methylcytidine(1402) in 16S rRNA + S-adenosyl-L-homocysteine + H(+). Functionally, specifically methylates the N4 position of cytidine in position 1402 (C1402) of 16S rRNA. The chain is Ribosomal RNA small subunit methyltransferase H from Vibrio atlanticus (strain LGP32) (Vibrio splendidus (strain Mel32)).